The sequence spans 154 residues: Protein X (154 aa).

A mitochondrial targeting sequence region spans residues 68–117 (PCALRFTSARRMETTVNAHGNLPKVLHKRTLGLSAMSTTDLEAYFKDCVF).

This sequence belongs to the orthohepadnavirus protein X family. May form homodimer. May interact with host CEBPA, CFLAR, CREB1, DDB1, E4F1, HBXIP, HSPD1/HSP60, NFKBIA, POLR2E and SMAD4. Interacts with host SMC5-SMC6 complex and induces its degradation. Interacts with host TRPC4AP; leading to prevent ubiquitination of TRPC4AP. Interacts with host PLSCR1; this interaction promotes ubiquitination and degradation of HBx and impairs HBx-mediated cell proliferation. Post-translationally, a fraction may be phosphorylated in insect cells and HepG2 cells, a human hepatoblastoma cell line. Phosphorylated in vitro by host protein kinase C or mitogen-activated protein kinase. N-acetylated in insect cells.

The protein resides in the host cytoplasm. It localises to the host nucleus. It is found in the host mitochondrion. Functionally, multifunctional protein that plays a role in silencing host antiviral defenses and promoting viral transcription. Does not seem to be essential for HBV infection. May be directly involved in development of cirrhosis and liver cancer (hepatocellular carcinoma). Most of cytosolic activities involve modulation of cytosolic calcium. The effect on apoptosis is controversial depending on the cell types in which the studies have been conducted. May induce apoptosis by localizing in mitochondria and causing loss of mitochondrial membrane potential. May also modulate apoptosis by binding host CFLAR, a key regulator of the death-inducing signaling complex (DISC). Promotes viral transcription by using the host E3 ubiquitin ligase DDB1 to target the SMC5-SMC6 complex to proteasomal degradation. This host complex would otherwise bind to viral episomal DNA, and prevents its transcription. Moderately stimulates transcription of many different viral and cellular transcription elements. Promoters and enhancers stimulated by HBx contain DNA binding sites for NF-kappa-B, AP-1, AP-2, c-EBP, ATF/CREB, or the calcium-activated factor NF-AT. This Hepatitis B virus genotype B/C subtype adw (isolate Okinawa/pODW282/1998) (HBV-B) protein is Protein X.